A 226-amino-acid chain; its full sequence is Probable septum site-determining protein MinC (226 aa).

Belongs to the MinC family. As to quaternary structure, interacts with MinD and FtsZ.

Cell division inhibitor that blocks the formation of polar Z ring septums. Rapidly oscillates between the poles of the cell to destabilize FtsZ filaments that have formed before they mature into polar Z rings. Prevents FtsZ polymerization. In Bacillus velezensis (strain DSM 23117 / BGSC 10A6 / LMG 26770 / FZB42) (Bacillus amyloliquefaciens subsp. plantarum), this protein is Probable septum site-determining protein MinC.